Consider the following 179-residue polypeptide: Large ribosomal subunit protein bL19 (179 aa).

Belongs to the bacterial ribosomal protein bL19 family.

Functionally, this protein is located at the 30S-50S ribosomal subunit interface and may play a role in the structure and function of the aminoacyl-tRNA binding site. The chain is Large ribosomal subunit protein bL19 from Rhizobium johnstonii (strain DSM 114642 / LMG 32736 / 3841) (Rhizobium leguminosarum bv. viciae).